The primary structure comprises 203 residues: Pyridoxal 5'-phosphate synthase subunit PdxT (203 aa).

Residue 49–51 (GES) coordinates L-glutamine. Cysteine 81 functions as the Nucleophile in the catalytic mechanism. L-glutamine-binding positions include arginine 110 and 139 to 140 (IR). Catalysis depends on charge relay system residues histidine 175 and glutamate 177.

Belongs to the glutaminase PdxT/SNO family. In terms of assembly, in the presence of PdxS, forms a dodecamer of heterodimers. Only shows activity in the heterodimer.

The catalysed reaction is aldehydo-D-ribose 5-phosphate + D-glyceraldehyde 3-phosphate + L-glutamine = pyridoxal 5'-phosphate + L-glutamate + phosphate + 3 H2O + H(+). It catalyses the reaction L-glutamine + H2O = L-glutamate + NH4(+). Its pathway is cofactor biosynthesis; pyridoxal 5'-phosphate biosynthesis. In terms of biological role, catalyzes the hydrolysis of glutamine to glutamate and ammonia as part of the biosynthesis of pyridoxal 5'-phosphate. The resulting ammonia molecule is channeled to the active site of PdxS. The protein is Pyridoxal 5'-phosphate synthase subunit PdxT of Parafrankia sp. (strain EAN1pec).